Reading from the N-terminus, the 671-residue chain is Protein cereblon (671 aa).

The segment covering 1-11 has biased composition (acidic residues); it reads MDGEEAADIDE. 3 disordered regions span residues 1-59, 104-130, and 150-187; these read MDGE…VDGD, LTGTTTPTPTAPENQAENAPEIEPAQP, and GHNVLNPGDDARSISSRHSGSDMSLDSPGSEDDSDAEA. Low complexity-rich tracts occupy residues 39-51 and 105-115; these read QQQQQMPQTSSGE and TGTTTPTPTAP. Residues 162-173 are compositionally biased toward polar residues; sequence SISSRHSGSDMS. In terms of domain architecture, Lon N-terminal spans 309-537; the sequence is RMLIFMHQHI…IIGSTLKQES (229 aa). The CULT domain occupies 536–645; the sequence is ESLFYCRYCN…LAGSSVRIGK (110 aa). Positions 541, 544, 610, and 613 each coordinate Zn(2+).

This sequence belongs to the CRBN family. As to quaternary structure, likely a component of a DCX (DDB1-CUL4-X-box) protein ligase complex. May interact with pic/DDB1. Post-translationally, ubiquitinated.

The protein resides in the nucleus. It functions in the pathway protein modification; protein ubiquitination. Functionally, substrate recognition component of a DCX (DDB1-CUL4-X-box) E3 protein ligase complex that mediates the ubiquitination and subsequent proteasomal degradation of target proteins. Has an essential role in mediating growth by negatively regulating insulin signaling. It also has a role in maintaining presynaptic function in the neuromuscular junction synapses of third-instar larvae. This chain is Protein cereblon, found in Drosophila grimshawi (Hawaiian fruit fly).